The chain runs to 85 residues: MEKMNLLKEITIFDLNKIKPGTKVQVTWYKGTEMEYTHNGEVIINNGEKFYYNYVDKEGYVGHCHVNALDLKNYPDSLIVEIKSK.

In Bacillus subtilis (strain 168), this protein is SPbeta prophage-derived uncharacterized protein YoqG (yoqG).